A 474-amino-acid chain; its full sequence is Vasculin-like protein 1 (474 aa).

Residues 17 to 42 (QSAKSPTATFEKHGEHLPRGEGRFGV) are disordered. Residues 26–38 (FEKHGEHLPRGEG) are compositionally biased toward basic and acidic residues. 2 positions are modified to phosphoserine: serine 49 and serine 76. A disordered region spans residues 91-191 (GNPSGWHSSS…VWENPPSAKQ (101 aa)). Residues 116-128 (NHRHWNGSFHSRK) are compositionally biased toward basic residues. Positions 136 to 154 (PPMEIREEKKEDKVEKLQF) are enriched in basic and acidic residues. Serine 202 is subject to Phosphoserine. The disordered stretch occupies residues 238 to 371 (LVPKPVPPPS…EEGCHQNGLA (134 aa)). The segment covering 262–277 (GSLSSSRESAFTSPIS) has biased composition (polar residues). Residues 291-312 (SSPKESPSSTTPPIEISSSRLT) show a composition bias toward low complexity. At serine 292 the chain carries Phosphoserine. Position 301 is a phosphothreonine (threonine 301). Composition is skewed to basic and acidic residues over residues 317–346 (RTTD…CDKL) and 356–365 (EPKENGEEGC). Position 382 is a phosphoserine (serine 382). The disordered stretch occupies residues 453-474 (AEFEDSDTETSSSETSDDDAWK).

The protein belongs to the vasculin family.

It localises to the nucleus. In terms of biological role, possible transcription factor. This Homo sapiens (Human) protein is Vasculin-like protein 1 (GPBP1L1).